A 211-amino-acid polypeptide reads, in one-letter code: FMN-dependent NADH:quinone oxidoreductase 3 (211 aa).

102–105 serves as a coordination point for FMN; the sequence is MWNF.

It belongs to the azoreductase type 1 family. As to quaternary structure, homodimer. It depends on FMN as a cofactor.

It catalyses the reaction 2 a quinone + NADH + H(+) = 2 a 1,4-benzosemiquinone + NAD(+). The enzyme catalyses N,N-dimethyl-1,4-phenylenediamine + anthranilate + 2 NAD(+) = 2-(4-dimethylaminophenyl)diazenylbenzoate + 2 NADH + 2 H(+). Functionally, quinone reductase that provides resistance to thiol-specific stress caused by electrophilic quinones. Its function is as follows. Also exhibits azoreductase activity. Catalyzes the reductive cleavage of the azo bond in aromatic azo compounds to the corresponding amines. The polypeptide is FMN-dependent NADH:quinone oxidoreductase 3 (Bacillus cereus (strain ATCC 10987 / NRS 248)).